A 421-amino-acid polypeptide reads, in one-letter code: Phosphatidylinositol 5-phosphate 4-kinase type-2 gamma (421 aa).

Residue Ala-2 is modified to N-acetylalanine. A Phosphoserine modification is found at Ser-26. The PIPK domain maps to 43–420 (AADPLVGVFL…RFLDFIANIF (378 aa)). A required for interaction with PIP5K1A region spans residues 69-75 (VMLLPDD). Ser-349 carries the post-translational modification Phosphoserine.

In terms of assembly, interacts with PIP5K1A; the interaction inhibits PIP5K1A kinase activity. Post-translationally, phosphorylated, phosphorylation is induced by EGF.

It localises to the endoplasmic reticulum. Its subcellular location is the cytoplasm. The enzyme catalyses a 1,2-diacyl-sn-glycero-3-phospho-(1D-myo-inositol-5-phosphate) + ATP = a 1,2-diacyl-sn-glycero-3-phospho-(1D-myo-inositol-4,5-bisphosphate) + ADP + H(+). It catalyses the reaction 1,2-dihexadecanoyl-sn-glycero-3-phospho-(1D-myo-inositol-5-phosphate) + ATP = 1,2-dihexadecanoyl-sn-glycero-3-phospho-(1D-myo-inositol-4,5-bisphosphate) + ADP + H(+). The catalysed reaction is 1,2-dihexadecanoyl-sn-glycero-3-phospho-(1D-myo-inositol-5-phosphate) + GTP = 1,2-dihexadecanoyl-sn-glycero-3-phospho-(1D-myo-inositol-4,5-bisphosphate) + GDP + H(+). Phosphatidylinositol 5-phosphate 4-kinase with low enzymatic activity. May be a GTP sensor, has higher GTP-dependent kinase activity than ATP-dependent kinase activity. PIP4Ks negatively regulate insulin signaling through a catalytic-independent mechanism. They interact with PIP5Ks and suppress PIP5K-mediated PtdIns(4,5)P2 synthesis and insulin-dependent conversion to PtdIns(3,4,5)P3. This chain is Phosphatidylinositol 5-phosphate 4-kinase type-2 gamma, found in Mus musculus (Mouse).